The sequence spans 486 residues: Glutamyl-tRNA(Gln) amidotransferase subunit A (486 aa).

Active-site charge relay system residues include K77 and S152. The active-site Acyl-ester intermediate is the S176.

The protein belongs to the amidase family. GatA subfamily. In terms of assembly, heterotrimer of A, B and C subunits.

The catalysed reaction is L-glutamyl-tRNA(Gln) + L-glutamine + ATP + H2O = L-glutaminyl-tRNA(Gln) + L-glutamate + ADP + phosphate + H(+). Allows the formation of correctly charged Gln-tRNA(Gln) through the transamidation of misacylated Glu-tRNA(Gln) in organisms which lack glutaminyl-tRNA synthetase. The reaction takes place in the presence of glutamine and ATP through an activated gamma-phospho-Glu-tRNA(Gln). This Pediococcus pentosaceus (strain ATCC 25745 / CCUG 21536 / LMG 10740 / 183-1w) protein is Glutamyl-tRNA(Gln) amidotransferase subunit A.